A 99-amino-acid chain; its full sequence is Cell division protein FtsB (99 aa).

Residues 1–3 (MKF) lie on the Cytoplasmic side of the membrane. Residues 4-21 (FVIALIVLLGLLQYRLWS) form a helical membrane-spanning segment. Over 22-99 (GSNSLPEYFV…GERSVSSPSQ (78 aa)) the chain is Periplasmic. The stretch at 36–73 (IAVQQEGNDKLNERNQVLKEEIIDLKSGTEAIEERARN) forms a coiled coil.

This sequence belongs to the FtsB family. Part of a complex composed of FtsB, FtsL and FtsQ.

It is found in the cell inner membrane. Its function is as follows. Essential cell division protein. May link together the upstream cell division proteins, which are predominantly cytoplasmic, with the downstream cell division proteins, which are predominantly periplasmic. This chain is Cell division protein FtsB, found in Shewanella sp. (strain W3-18-1).